The sequence spans 244 residues: 5-oxoprolinase subunit A (244 aa).

This sequence belongs to the LamB/PxpA family. Forms a complex composed of PxpA, PxpB and PxpC.

The enzyme catalyses 5-oxo-L-proline + ATP + 2 H2O = L-glutamate + ADP + phosphate + H(+). In terms of biological role, catalyzes the cleavage of 5-oxoproline to form L-glutamate coupled to the hydrolysis of ATP to ADP and inorganic phosphate. The chain is 5-oxoprolinase subunit A from Escherichia coli (strain SMS-3-5 / SECEC).